The chain runs to 434 residues: Serine hydroxymethyltransferase (434 aa).

(6S)-5,6,7,8-tetrahydrofolate-binding positions include leucine 132 and 136–138; that span reads GHL. Residue lysine 241 is modified to N6-(pyridoxal phosphate)lysine.

It belongs to the SHMT family. Homodimer. The cofactor is pyridoxal 5'-phosphate.

Its subcellular location is the cytoplasm. It catalyses the reaction (6R)-5,10-methylene-5,6,7,8-tetrahydrofolate + glycine + H2O = (6S)-5,6,7,8-tetrahydrofolate + L-serine. It participates in one-carbon metabolism; tetrahydrofolate interconversion. Its pathway is amino-acid biosynthesis; glycine biosynthesis; glycine from L-serine: step 1/1. In terms of biological role, catalyzes the reversible interconversion of serine and glycine with tetrahydrofolate (THF) serving as the one-carbon carrier. This reaction serves as the major source of one-carbon groups required for the biosynthesis of purines, thymidylate, methionine, and other important biomolecules. Also exhibits THF-independent aldolase activity toward beta-hydroxyamino acids, producing glycine and aldehydes, via a retro-aldol mechanism. This chain is Serine hydroxymethyltransferase, found in Kineococcus radiotolerans (strain ATCC BAA-149 / DSM 14245 / SRS30216).